We begin with the raw amino-acid sequence, 210 residues long: Small ribosomal subunit protein uS3 (210 aa).

The KH type-2 domain occupies 17–86 (IDEFLEKELR…NPQIDVQEIK (70 aa)).

Belongs to the universal ribosomal protein uS3 family. In terms of assembly, part of the 30S ribosomal subunit.

Binds the lower part of the 30S subunit head. The chain is Small ribosomal subunit protein uS3 from Pyrococcus abyssi (strain GE5 / Orsay).